Reading from the N-terminus, the 292-residue chain is 5,10-methylenetetrahydrofolate reductase (292 aa).

The active-site Proton donor/acceptor is the E28. Residue T59 coordinates NADH. Residues Y60, A62, H88, R118, G119, D120, A132, Y152, H156, D165, N168, K171, and K172 each contribute to the FAD site. D120 lines the (6S)-5-methyl-5,6,7,8-tetrahydrofolate pocket. Q183 serves as a coordination point for NADH. Q183 serves as a coordination point for (6S)-5-methyl-5,6,7,8-tetrahydrofolate.

Belongs to the methylenetetrahydrofolate reductase family. Requires FAD as cofactor.

The catalysed reaction is (6S)-5-methyl-5,6,7,8-tetrahydrofolate + NAD(+) = (6R)-5,10-methylene-5,6,7,8-tetrahydrofolate + NADH + H(+). The protein operates within one-carbon metabolism; tetrahydrofolate interconversion. Its pathway is amino-acid biosynthesis; L-methionine biosynthesis via de novo pathway. Catalyzes the NADH-dependent reduction of 5,10-methylenetetrahydrofolate to 5-methyltetrahydrofolate. Is required to provide the methyl group necessary for methionine synthetase to convert homocysteine to methionine; the methyl group is given by 5-methyltetrahydrofolate. In Buchnera aphidicola subsp. Acyrthosiphon pisum (strain APS) (Acyrthosiphon pisum symbiotic bacterium), this protein is 5,10-methylenetetrahydrofolate reductase (metF).